Consider the following 68-residue polypeptide: Large ribosomal subunit protein bL31 (68 aa).

4 residues coordinate Zn(2+): cysteine 16, cysteine 18, cysteine 37, and cysteine 40.

Belongs to the bacterial ribosomal protein bL31 family. Type A subfamily. As to quaternary structure, part of the 50S ribosomal subunit. It depends on Zn(2+) as a cofactor.

Its function is as follows. Binds the 23S rRNA. The polypeptide is Large ribosomal subunit protein bL31 (Acidithiobacillus ferrooxidans (strain ATCC 23270 / DSM 14882 / CIP 104768 / NCIMB 8455) (Ferrobacillus ferrooxidans (strain ATCC 23270))).